Here is a 317-residue protein sequence, read N- to C-terminus: MQNETRSLWPHKDLLDVDQLSKDELLHLLDTAAQFHEINRRPVKKVPTLKGKSVILFFAEPSTRTKTSFDVAGKRLSADTFSLAKSGSSLQKGESLKDTALTLEAMNPDVLVIRHSSSGAARFLAERLACGVVNAGDGWHAHPTQALLDCYSLRQVWGDTFEGRTLCILGDIAHSRVARSNVKLLTSLGVRVRLCAPRTLLPAGVGNWPVEVFTDLDAAVRDADAVMCLRLQLERQQAGLLPDLREYSNRYCLTPRRLELAKPEAKVLHPGPMNRGLEIASSIADAPASLVLDQVAAGVATRMAILFLLATRTDGGR.

Carbamoyl phosphate-binding residues include R64 and T65. K92 contributes to the L-aspartate binding site. Carbamoyl phosphate-binding residues include R114, H142, and Q145. 2 residues coordinate L-aspartate: R176 and R230. Carbamoyl phosphate contacts are provided by G271 and P272.

The protein belongs to the aspartate/ornithine carbamoyltransferase superfamily. ATCase family. As to quaternary structure, heterododecamer (2C3:3R2) of six catalytic PyrB chains organized as two trimers (C3), and six regulatory PyrI chains organized as three dimers (R2).

The catalysed reaction is carbamoyl phosphate + L-aspartate = N-carbamoyl-L-aspartate + phosphate + H(+). The protein operates within pyrimidine metabolism; UMP biosynthesis via de novo pathway; (S)-dihydroorotate from bicarbonate: step 2/3. Its function is as follows. Catalyzes the condensation of carbamoyl phosphate and aspartate to form carbamoyl aspartate and inorganic phosphate, the committed step in the de novo pyrimidine nucleotide biosynthesis pathway. This is Aspartate carbamoyltransferase catalytic subunit from Nitratidesulfovibrio vulgaris (strain ATCC 29579 / DSM 644 / CCUG 34227 / NCIMB 8303 / VKM B-1760 / Hildenborough) (Desulfovibrio vulgaris).